A 359-amino-acid polypeptide reads, in one-letter code: Phospho-N-acetylmuramoyl-pentapeptide-transferase (359 aa).

10 helical membrane passes run 3-23, 55-75, 84-104, 117-137, 156-176, 190-210, 231-251, 255-275, 283-303, and 330-350; these read QILI…PVLI, VAII…GVLM, GLLV…DDLI, TAKT…ALQF, IATV…VVSA, LAAG…FWQF, LAII…WNAA, IFMG…LSVT, VVLG…ILAF, and VIIR…ALFY.

The protein belongs to the glycosyltransferase 4 family. MraY subfamily. The cofactor is Mg(2+).

It localises to the cell membrane. The catalysed reaction is UDP-N-acetyl-alpha-D-muramoyl-L-alanyl-gamma-D-glutamyl-meso-2,6-diaminopimeloyl-D-alanyl-D-alanine + di-trans,octa-cis-undecaprenyl phosphate = di-trans,octa-cis-undecaprenyl diphospho-N-acetyl-alpha-D-muramoyl-L-alanyl-D-glutamyl-meso-2,6-diaminopimeloyl-D-alanyl-D-alanine + UMP. It functions in the pathway cell wall biogenesis; peptidoglycan biosynthesis. In terms of biological role, catalyzes the initial step of the lipid cycle reactions in the biosynthesis of the cell wall peptidoglycan: transfers peptidoglycan precursor phospho-MurNAc-pentapeptide from UDP-MurNAc-pentapeptide onto the lipid carrier undecaprenyl phosphate, yielding undecaprenyl-pyrophosphoryl-MurNAc-pentapeptide, known as lipid I. This Mycolicibacterium gilvum (strain PYR-GCK) (Mycobacterium gilvum (strain PYR-GCK)) protein is Phospho-N-acetylmuramoyl-pentapeptide-transferase.